Consider the following 353-residue polypeptide: Photosystem II D2 protein (353 aa).

An N-acetylthreonine modification is found at Thr-2. The residue at position 2 (Thr-2) is a Phosphothreonine. Residues 41–61 (CAYFALGGWFTGTTFVTSWYT) form a helical membrane-spanning segment. His-118 lines the chlorophyll a pocket. The chain crosses the membrane as a helical span at residues 125 to 141 (GFMLRQFELARSVQLRP). Positions 130 and 143 each coordinate pheophytin a. The helical transmembrane segment at 153-166 (VFVSVFLIYPLGQS) threads the bilayer. Residue His-198 coordinates chlorophyll a. A helical membrane pass occupies residues 208-228 (AALLCAIHGATVENTLFEDGD). A plastoquinone is bound by residues His-215 and Phe-262. Fe cation is bound at residue His-215. Fe cation is bound at residue His-269. The helical transmembrane segment at 279-295 (GLWMSALGVVGLALNLR) threads the bilayer.

The protein belongs to the reaction center PufL/M/PsbA/D family. As to quaternary structure, PSII is composed of 1 copy each of membrane proteins PsbA, PsbB, PsbC, PsbD, PsbE, PsbF, PsbH, PsbI, PsbJ, PsbK, PsbL, PsbM, PsbT, PsbX, PsbY, PsbZ, Psb30/Ycf12, at least 3 peripheral proteins of the oxygen-evolving complex and a large number of cofactors. It forms dimeric complexes. It depends on The D1/D2 heterodimer binds P680, chlorophylls that are the primary electron donor of PSII, and subsequent electron acceptors. It shares a non-heme iron and each subunit binds pheophytin, quinone, additional chlorophylls, carotenoids and lipids. There is also a Cl(-1) ion associated with D1 and D2, which is required for oxygen evolution. The PSII complex binds additional chlorophylls, carotenoids and specific lipids. as a cofactor.

The protein localises to the plastid. It is found in the chloroplast thylakoid membrane. It catalyses the reaction 2 a plastoquinone + 4 hnu + 2 H2O = 2 a plastoquinol + O2. Its function is as follows. Photosystem II (PSII) is a light-driven water:plastoquinone oxidoreductase that uses light energy to abstract electrons from H(2)O, generating O(2) and a proton gradient subsequently used for ATP formation. It consists of a core antenna complex that captures photons, and an electron transfer chain that converts photonic excitation into a charge separation. The D1/D2 (PsbA/PsbD) reaction center heterodimer binds P680, the primary electron donor of PSII as well as several subsequent electron acceptors. D2 is needed for assembly of a stable PSII complex. This chain is Photosystem II D2 protein, found in Ceratophyllum demersum (Rigid hornwort).